An 896-amino-acid polypeptide reads, in one-letter code: Valine--tRNA ligase (896 aa).

The 'HIGH' region motif lies at 48–58; sequence PNVTGSLHMGH. Positions 543–547 match the 'KMSKS' region motif; it reads KMSKS. Lys546 contributes to the ATP binding site. Positions 830 to 896 form a coiled coil; that stretch reads VIDLDAERTR…ARLGAALERL (67 aa).

It belongs to the class-I aminoacyl-tRNA synthetase family. ValS type 1 subfamily. Monomer.

The protein localises to the cytoplasm. It catalyses the reaction tRNA(Val) + L-valine + ATP = L-valyl-tRNA(Val) + AMP + diphosphate. Catalyzes the attachment of valine to tRNA(Val). As ValRS can inadvertently accommodate and process structurally similar amino acids such as threonine, to avoid such errors, it has a 'posttransfer' editing activity that hydrolyzes mischarged Thr-tRNA(Val) in a tRNA-dependent manner. The sequence is that of Valine--tRNA ligase from Granulibacter bethesdensis (strain ATCC BAA-1260 / CGDNIH1).